The chain runs to 371 residues: tRNA-specific 2-thiouridylase MnmA (371 aa).

Residues 22-29 (GLSGGVDS) and M48 contribute to the ATP site. Residues 108 to 110 (NPD) form an interaction with target base in tRNA region. Residue C113 is the Nucleophile of the active site. Cysteines 113 and 209 form a disulfide. Position 137 (G137) interacts with ATP. Residues 159–161 (KDQ) form an interaction with tRNA region. Residue C209 is the Cysteine persulfide intermediate of the active site.

Belongs to the MnmA/TRMU family.

The protein localises to the cytoplasm. It catalyses the reaction S-sulfanyl-L-cysteinyl-[protein] + uridine(34) in tRNA + AH2 + ATP = 2-thiouridine(34) in tRNA + L-cysteinyl-[protein] + A + AMP + diphosphate + H(+). Functionally, catalyzes the 2-thiolation of uridine at the wobble position (U34) of tRNA, leading to the formation of s(2)U34. This Coxiella burnetii (strain CbuG_Q212) (Coxiella burnetii (strain Q212)) protein is tRNA-specific 2-thiouridylase MnmA.